We begin with the raw amino-acid sequence, 126 residues long: MMESTRKGCWGEERVLRLLRRRGWQLVSQRWSCRYGELDLVLEKQQRLLVVEVKSRRSRGLDLWGLSAFNKGKQLRLKRAIGCWLATHPYFAEHSLELVLALVPLPPSRNTLDWIRIDDLDIDAAD.

Belongs to the UPF0102 family.

The protein is UPF0102 protein P9303_16141 of Prochlorococcus marinus (strain MIT 9303).